Reading from the N-terminus, the 318-residue chain is Ribose-phosphate pyrophosphokinase (318 aa).

ATP-binding positions include 40-42 and 99-100; these read DGE and RQ. 2 residues coordinate Mg(2+): H134 and D173. K196 is a catalytic residue. D-ribose 5-phosphate is bound by residues R198, D222, and 226 to 230; that span reads DTAGT.

It belongs to the ribose-phosphate pyrophosphokinase family. Class I subfamily. As to quaternary structure, homohexamer. Requires Mg(2+) as cofactor.

It localises to the cytoplasm. It catalyses the reaction D-ribose 5-phosphate + ATP = 5-phospho-alpha-D-ribose 1-diphosphate + AMP + H(+). It functions in the pathway metabolic intermediate biosynthesis; 5-phospho-alpha-D-ribose 1-diphosphate biosynthesis; 5-phospho-alpha-D-ribose 1-diphosphate from D-ribose 5-phosphate (route I): step 1/1. Involved in the biosynthesis of the central metabolite phospho-alpha-D-ribosyl-1-pyrophosphate (PRPP) via the transfer of pyrophosphoryl group from ATP to 1-hydroxyl of ribose-5-phosphate (Rib-5-P). This is Ribose-phosphate pyrophosphokinase from Burkholderia pseudomallei (strain K96243).